Consider the following 331-residue polypeptide: Low affinity immunoglobulin epsilon Fc receptor (331 aa).

The Cytoplasmic segment spans residues 1–23 (MEENEYSGYWEPPRKRCCCARRG). 2 S-palmitoyl cysteine lipidation sites follow: Cys17 and Cys18. The chain crosses the membrane as a helical; Signal-anchor for type II membrane protein span at residues 24–49 (TQLMLVGLLSTAMWAGLLALLLLWHW). The Extracellular portion of the chain corresponds to 50 to 331 (ETEKNLKQLG…PTRPTPKSEP (282 aa)). N-linked (GlcNAc...) asparagine glycosylation occurs at Asn65. 3 repeats span residues 71 to 91 (KDLQ…VQMS), 92 to 112 (QNLQ…SRLS), and 113 to 133 (QNLT…SKLS). An N-linked (GlcNAc...) asparagine glycan is attached at Asn114. 4 disulfide bridges follow: Cys183-Cys311, Cys186-Cys197, Cys214-Cys305, and Cys282-Cys296. One can recognise a C-type lectin domain in the interval 185–298 (ICPKNWLHFQ…GQWNDAFCRS (114 aa)). Glu272, Asn292, and Asp293 together coordinate Ca(2+). A glycan (O-linked (Xyl...) (chondroitin sulfate) serine) is linked at Ser319.

Homotrimer. Interacts (via C-type lectin domain) with IGHE (via CH3 region); this interaction regulates IgE homeostasis. Interacts (via C-terminus) with CR2/CD21 (via Sushi domain 1 and 2). Post-translationally, N- and O-glycosylated.

Its subcellular location is the cell membrane. The protein localises to the secreted. Its function is as follows. Low-affinity receptor for immunoglobulin E (IgE) and CR2/CD21. Has essential roles in the regulation of IgE production and in the differentiation of B cells. On B cells, initiates IgE-dependent antigen uptake and presentation to T cells. On macrophages, upon IgE binding and antigen cross-linking induces intracellular killing of parasites through activation of L-Arginine-nitric oxide pathway. This is Low affinity immunoglobulin epsilon Fc receptor (Fcer2) from Mus musculus (Mouse).